We begin with the raw amino-acid sequence, 102 residues long: Nucleoid-associated protein WS1681 (102 aa).

This sequence belongs to the YbaB/EbfC family. As to quaternary structure, homodimer.

It localises to the cytoplasm. The protein localises to the nucleoid. Its function is as follows. Binds to DNA and alters its conformation. May be involved in regulation of gene expression, nucleoid organization and DNA protection. The chain is Nucleoid-associated protein WS1681 from Wolinella succinogenes (strain ATCC 29543 / DSM 1740 / CCUG 13145 / JCM 31913 / LMG 7466 / NCTC 11488 / FDC 602W) (Vibrio succinogenes).